The chain runs to 791 residues: IQ motif and ubiquitin-like domain-containing protein (791 aa).

The disordered stretch occupies residues Met-1–Pro-73. The region spanning Ala-131 to Pro-207 is the Ubiquitin-like domain. An IQ domain is found at Arg-338–Leu-367.

As to quaternary structure, component of the axonemal radial spoke 1 (RS1) complex, at least composed of spoke head proteins RSPH1, RSPH3, RSPH9 and the cilia-specific component RSPH4A or sperm-specific component RSPH6A, spoke stalk proteins RSPH14, DNAJB13, DYDC1, ROPN1L and NME5, and the anchor protein IQUB. Does not appear to be part of radial spoke complexes 2 or 3 (RS2 or RS3). Interacts with CALM1. Interacts with DNAJB13. Interacts with DYNLL2. Interacts with NME5. Interacts with RSPH3. Interacts with RSPH9. Interacts with ZMYND10. Interacts with calmodulin; the interaction occurs in conditions of low but not high calcium.

The protein localises to the cytoplasm. The protein resides in the cytoskeleton. It localises to the flagellum axoneme. Its subcellular location is the cell projection. It is found in the cilium. Adapter protein that anchors the radial spoke 1 (RS1) complex to the A microtubule of outer doublet microtubules in axonemes. The triple radial spokes (RS1, RS2 and RS3) are required to modulate beating of the sperm flagellum. May play a role in inhibiting signaling via MAPK1/ERK2 and MAPK3/ERK1. Additionally, may play a role in the functioning of cilia. Not required for the functioning of tracheal or ependymal cilia. In Homo sapiens (Human), this protein is IQ motif and ubiquitin-like domain-containing protein (IQUB).